The following is a 146-amino-acid chain: MRVLVQAEPFEFGAEAQTFADGAAGAGAIVTFTGLVRDLSGALEAMEIEHYPGMTERAIAAIAEEARQRWHLIDALVIHRHGRLGPSEPIMMVATAAAHRAEAFAAAEFLMDYLKSRAPFWKKEVTAGGADWVAAKEADEAALGRW.

Substrate-binding positions include 35-37 (LVR), 99-100 (HR), K115, and 122-124 (KKE).

Belongs to the MoaE family. Heterotetramer of 2 MoaD subunits and 2 MoaE subunits. Also stable as homodimer. The enzyme changes between these two forms during catalysis.

The catalysed reaction is 2 [molybdopterin-synthase sulfur-carrier protein]-C-terminal-Gly-aminoethanethioate + cyclic pyranopterin phosphate + H2O = molybdopterin + 2 [molybdopterin-synthase sulfur-carrier protein]-C-terminal Gly-Gly + 2 H(+). It participates in cofactor biosynthesis; molybdopterin biosynthesis. Converts molybdopterin precursor Z into molybdopterin. This requires the incorporation of two sulfur atoms into precursor Z to generate a dithiolene group. The sulfur is provided by MoaD. The polypeptide is Molybdopterin synthase catalytic subunit (moaE) (Cereibacter sphaeroides (strain ATCC 17023 / DSM 158 / JCM 6121 / CCUG 31486 / LMG 2827 / NBRC 12203 / NCIMB 8253 / ATH 2.4.1.) (Rhodobacter sphaeroides)).